The chain runs to 462 residues: Integrator complex subunit 12 (462 aa).

The tract at residues 42-132 (GIDSSYRPSQ…PETQSSPITV (91 aa)) is disordered. Polar residues predominate over residues 59–86 (ISSTKNISIKQEPKISSSLPSGNNNGKV). K68 participates in a covalent cross-link: Glycyl lysine isopeptide (Lys-Gly) (interchain with G-Cter in SUMO2). The span at 88-124 (TTEKVKKEAEKRPADKMKSDITEGVDIPKKPRLEKPE) shows a compositional bias: basic and acidic residues. Residue S128 is modified to Phosphoserine. Residues 159 to 215 (GLACVVCRQMMVASGNQLVECQECHNLYHRDCHKPQVTDKEANDPRLVWYCARCTRQ) form a PHD-type zinc finger. K254 is covalently cross-linked (Glycyl lysine isopeptide (Lys-Gly) (interchain with G-Cter in SUMO2)). Residues 301-328 (SSAGPSTAKLSSTTQNNTGKPATSSANQ) show a composition bias toward polar residues. The tract at residues 301 to 462 (SSAGPSTAKL…KKAAQKKLKK (162 aa)) is disordered. Composition is skewed to low complexity over residues 347–358 (KIGSNNSTTPTV) and 382–437 (VSKV…GPTS). A compositionally biased stretch (basic residues) spans 449-462 (QMVKKKAAQKKLKK).

This sequence belongs to the Integrator subunit 12 family. As to quaternary structure, component of the Integrator complex, composed of core subunits INTS1, INTS2, INTS3, INTS4, INTS5, INTS6, INTS7, INTS8, INTS9/RC74, INTS10, INTS11/CPSF3L, INTS12, INTS13, INTS14 and INTS15. The core complex associates with protein phosphatase 2A subunits PPP2CA and PPP2R1A, to form the Integrator-PP2A (INTAC) complex. Post-translationally, dephosphorylated at Ser-128 by the PNUTS-PP1 complex, promoting RNA polymerase II transcription pause-release.

Its subcellular location is the nucleus. Component of the integrator complex, a multiprotein complex that terminates RNA polymerase II (Pol II) transcription in the promoter-proximal region of genes. The integrator complex provides a quality checkpoint during transcription elongation by driving premature transcription termination of transcripts that are unfavorably configured for transcriptional elongation: the complex terminates transcription by (1) catalyzing dephosphorylation of the C-terminal domain (CTD) of Pol II subunit POLR2A/RPB1 and SUPT5H/SPT5, (2) degrading the exiting nascent RNA transcript via endonuclease activity and (3) promoting the release of Pol II from bound DNA. The integrator complex is also involved in terminating the synthesis of non-coding Pol II transcripts, such as enhancer RNAs (eRNAs), small nuclear RNAs (snRNAs), telomerase RNAs and long non-coding RNAs (lncRNAs). Mediates recruitment of cytoplasmic dynein to the nuclear envelope, probably as component of the integrator complex. The protein is Integrator complex subunit 12 of Homo sapiens (Human).